The chain runs to 705 residues: Phycobiliprotein ApcE (705 aa).

The phycobilin-like 1 stretch occupies residues 18–76 (QTVPGSTIVQAEQQDRFPQQGELRELSSYFQSGLKRLAIAEIITRNSDTIVSRAANRIF). Residues 77–145 (VGGSPLAYIE…VRIPSGFRPI (69 aa)) form a phycobilin-like loop region. Residues 146-238 (NVARYGPRNM…YFDVLIREFE (93 aa)) are phycobilin-like 2. Position 196 (C196) interacts with (2R,3E)-phycocyanobilin. PBS-linker domains follow at residues 253-433 (DQQG…FVKV) and 514-691 (KIFK…SLRP). A disordered region spans residues 685–705 (VKASLRPAAGAQERRPEVGRR). Basic and acidic residues predominate over residues 696 to 705 (QERRPEVGRR).

It belongs to the phycobilisome linker protein family. Phycobilisomes of this organism are composed of a two cylinder core, from which six rods radiate. The core is mainly composed of allophycocyanin alpha and beta chains, and of three minor components: the allophycocyanin alpha-B chain, a 18.3 kDa polypeptide, and the anchor polypeptide L-CM. In terms of processing, contains one covalently linked bilin chromophore. This protein autochromophorylates.

The protein resides in the cellular thylakoid membrane. Functionally, this protein is postulated to act both as terminal energy acceptor (by its phycobilin-like domains) and as a linker polypeptide (by its repeats and arms) that stabilizes the phycobilisome core architecture. Has intrinsic bilin lyase activity. This is Phycobiliprotein ApcE (apcE) from Synechococcus sp. (strain ATCC 27144 / PCC 6301 / SAUG 1402/1) (Anacystis nidulans).